The following is a 163-amino-acid chain: Probable metallophosphoesterase MG207 (163 aa).

Asp9, His11, Asp34, Asn53, His75, His107, and His109 together coordinate Mn(2+).

This sequence belongs to the metallophosphoesterase superfamily. YfcE family. Requires Mn(2+) as cofactor.

The sequence is that of Probable metallophosphoesterase MG207 from Mycoplasma genitalium (strain ATCC 33530 / DSM 19775 / NCTC 10195 / G37) (Mycoplasmoides genitalium).